Here is a 376-residue protein sequence, read N- to C-terminus: Succinyl-diaminopimelate desuccinylase (376 aa).

His67 is a binding site for Zn(2+). Asp69 is an active-site residue. Asp100 contacts Zn(2+). Residue Glu134 is the Proton acceptor of the active site. 3 residues coordinate Zn(2+): Glu135, Glu163, and His349.

This sequence belongs to the peptidase M20A family. DapE subfamily. Homodimer. Requires Zn(2+) as cofactor. It depends on Co(2+) as a cofactor.

The catalysed reaction is N-succinyl-(2S,6S)-2,6-diaminopimelate + H2O = (2S,6S)-2,6-diaminopimelate + succinate. The protein operates within amino-acid biosynthesis; L-lysine biosynthesis via DAP pathway; LL-2,6-diaminopimelate from (S)-tetrahydrodipicolinate (succinylase route): step 3/3. Its function is as follows. Catalyzes the hydrolysis of N-succinyl-L,L-diaminopimelic acid (SDAP), forming succinate and LL-2,6-diaminopimelate (DAP), an intermediate involved in the bacterial biosynthesis of lysine and meso-diaminopimelic acid, an essential component of bacterial cell walls. The chain is Succinyl-diaminopimelate desuccinylase from Haemophilus ducreyi (strain 35000HP / ATCC 700724).